The sequence spans 394 residues: MDSPRFPEETVLITGGGGYFGFRLGCALNQKGARVILFDITQPAQNLPEGIKFVCGDIRCLADVETAFQDAEKVACVFHVASYGMSGREQLNKTQIEEVNVGGTENILRACLERGVPRLVYTSTFNVIFGGQVIRNGDESLPYLPLHLHPDHYSRTKSIAEKKVLEANGLAFKQGDGILRTCAIRPAGIYGAGEQRHLPRIVSYIERGLFRFVYGDPQSLVEFVHVDNLAKAHILASEALKADKGHVASGQPYFISDGRPVNNFEFFRPLVEGLGYTFPSTRLPLTLIYCLAFLVEMTHFIVGRLYNFQPFLTRTEVYKTGVTHYFSLEKAKKELGFEPQPFDLQEVVEWFKAHGHGRGAAGQDSEFMLWDGILILLLALSVLTWILPSTTLSI.

Tyrosine 153 serves as the catalytic Proton acceptor. NAD(+) is bound at residue lysine 157. The next 2 helical transmembrane spans lie at 283-303 (LPLTLIYCLAFLVEMTHFIVG) and 367-387 (FMLWDGILILLLALSVLTWIL).

The protein belongs to the 3-beta-HSD family.

Its subcellular location is the membrane. This is Short-chain dehydrogenase/reductase family 42E member 1 (Sdr42e1) from Mus musculus (Mouse).